The sequence spans 308 residues: Mycothiol acetyltransferase (308 aa).

N-acetyltransferase domains are found at residues 16-152 and 165-308; these read ETLA…RPLA and VTVR…RTES. Position 47 (Glu47) interacts with 1D-myo-inositol 2-(L-cysteinylamino)-2-deoxy-alpha-D-glucopyranoside. Acetyl-CoA is bound at residue 91–93; sequence LVV. The 1D-myo-inositol 2-(L-cysteinylamino)-2-deoxy-alpha-D-glucopyranoside site is built by Glu192, Lys231, and Glu240. Acetyl-CoA-binding positions include 244-246 and 251-257; these read LGV and QGGGLGK. Tyr278 contacts 1D-myo-inositol 2-(L-cysteinylamino)-2-deoxy-alpha-D-glucopyranoside.

It belongs to the acetyltransferase family. MshD subfamily. As to quaternary structure, monomer.

It catalyses the reaction 1D-myo-inositol 2-(L-cysteinylamino)-2-deoxy-alpha-D-glucopyranoside + acetyl-CoA = mycothiol + CoA + H(+). Catalyzes the transfer of acetyl from acetyl-CoA to desacetylmycothiol (Cys-GlcN-Ins) to form mycothiol. In Streptomyces avermitilis (strain ATCC 31267 / DSM 46492 / JCM 5070 / NBRC 14893 / NCIMB 12804 / NRRL 8165 / MA-4680), this protein is Mycothiol acetyltransferase.